The sequence spans 315 residues: Cobalamin biosynthesis protein CobD (315 aa).

A run of 5 helical transmembrane segments spans residues isoleucine 48–isoleucine 68, proline 77–leucine 97, aspartate 150–tyrosine 170, valine 200–leucine 220, and methionine 295–isoleucine 315.

This sequence belongs to the CobD/CbiB family.

The protein localises to the cell membrane. It participates in cofactor biosynthesis; adenosylcobalamin biosynthesis. In terms of biological role, converts cobyric acid to cobinamide by the addition of aminopropanol on the F carboxylic group. This Clostridium perfringens (strain 13 / Type A) protein is Cobalamin biosynthesis protein CobD.